The chain runs to 466 residues: Glutamate--tRNA ligase 2 (466 aa).

Positions 9–19 (PSPTGSLHLGG) match the 'HIGH' region motif. The 'KMSKS' region motif lies at 236–240 (KLSKR). Lysine 239 is a binding site for ATP.

Belongs to the class-I aminoacyl-tRNA synthetase family. Glutamate--tRNA ligase type 1 subfamily. Monomer.

Its subcellular location is the cytoplasm. It carries out the reaction tRNA(Glu) + L-glutamate + ATP = L-glutamyl-tRNA(Glu) + AMP + diphosphate. In terms of biological role, catalyzes the attachment of glutamate to tRNA(Glu) in a two-step reaction: glutamate is first activated by ATP to form Glu-AMP and then transferred to the acceptor end of tRNA(Glu). This chain is Glutamate--tRNA ligase 2, found in Anaplasma marginale (strain St. Maries).